The chain runs to 405 residues: Potassium channel subfamily K member 18 (405 aa).

Residues 43–63 traverse the membrane as a helical segment; sequence LPGLCFLCCLVTYALVGAALF. N94 carries N-linked (GlcNAc...) asparagine glycosylation. Residues 125–151 constitute an intramembrane region (pore-forming); that stretch reads FLSALFFCCTVFSTVGYGHMYPVTRLG. T138, V139, G140, and Y141 together coordinate K(+). Residues 138 to 143 are selectivity filter 1; it reads TVGYGH. Residues 153–173 traverse the membrane as a helical segment; sequence FLCMLYALFGIPLMFLVLTDI. Residues 221 to 226 are interaction with calcineurin; that stretch reads PQIVID. The interaction with YWHAH stretch occupies residues 272 to 277; it reads RSNSCP. Phosphoserine occurs at positions 275 and 287. Residues 304–324 form a helical membrane-spanning segment; the sequence is IPLPVIALVIFAYISCAAAIL. Residues 337 to 351 constitute an intramembrane region (pore-forming); sequence FYFCFVTLTTIGFGD. A selectivity filter 2 region spans residues 346–351; sequence TIGFGD. A helical membrane pass occupies residues 358-378; it reads HFFLFFSIYIIVGMEILFIAF.

Belongs to the two pore domain potassium channel (TC 1.A.1.8) family. As to quaternary structure, homodimer. Heterodimer with KCNK2. Heterodimer with KCNK10. Interacts with calcineurin. Interacts with YWHAH, in a phosphorylation-dependent manner. In terms of processing, phosphorylation of Ser-275 is required for the binding of 14-3-3eta/YWHAH. Calcineurin-mediated dephosphorylation of Ser-287 enhances channel activity. Post-translationally, N-glycosylated.

The protein localises to the cell membrane. It catalyses the reaction K(+)(in) = K(+)(out). Its activity is regulated as follows. Activated by volatile anesthetics, such as isoflurane and inhibited by local anesthetics such as bupivacaine and lidocaine. Inhibited by extracellular acidic pH. Inhibited by Zn(2+) ions. Its function is as follows. K(+) channel that conducts outward and inward rectifying currents at depolarized and hyperpolarized membrane potentials, respectively. The outward rectifying currents are voltage-dependent, coupled to K(+) electrochemical gradient across the membrane, whereas the inward currents can be induced in response to activation of Ca(2+)-mobilizing receptors. Homo- and heterodimerizes to form functional channels with distinct regulatory and gating properties. In trigeminal ganglia sensory neurons, the heterodimers of KCNK18/TRESK and KCNK2/TREK-1 or KCNK10/TREK-2 inhibit neuronal firing and neurogenic inflammation by stabilizing the resting membrane potential at K(+) equilibrium potential as well as by regulating the threshold of action potentials and the spike frequency. In thymocytes, conducts K(+) currents upon T cell receptor (TCR) signaling leading to sustained Ca(2+) influx and NF-kappa-B activation, FOXP3 transcription and positive selection of regulatory T cell (Treg) progenitor subsets. Appears to mediate the analgesics effects of hydroxy-alpha-sanshool, a metabolite naturally present in Schezuan pepper and other Xanthoxylum plants. The protein is Potassium channel subfamily K member 18 (Kcnk18) of Rattus norvegicus (Rat).